Here is a 224-residue protein sequence, read N- to C-terminus: Thymidylate kinase (224 aa).

13-20 is an ATP binding site; that stretch reads GGEGAGKS.

Belongs to the thymidylate kinase family.

It carries out the reaction dTMP + ATP = dTDP + ADP. Phosphorylation of dTMP to form dTDP in both de novo and salvage pathways of dTTP synthesis. In Agrobacterium fabrum (strain C58 / ATCC 33970) (Agrobacterium tumefaciens (strain C58)), this protein is Thymidylate kinase.